The chain runs to 145 residues: MPKNKGKGGKNRKRGKNEADDDKRELVFKEDGQEYAQVLRMLGNGRCEAMCIDGTKRLCHIRGKMHKKVWIAAGDIILVGLRDYQDDKADVILKLMPDEARLLKAYGELPDNTRLNEGIGAGGLDEEMDTANDYIEFEDEDIDKI.

The span at 1–15 shows a compositional bias: basic residues; it reads MPKNKGKGGKNRKRG. The tract at residues 1–25 is disordered; that stretch reads MPKNKGKGGKNRKRGKNEADDDKRE. Basic and acidic residues predominate over residues 16 to 25; the sequence is KNEADDDKRE. Positions 22 to 96 constitute an S1-like domain; the sequence is DKRELVFKED…DKADVILKLM (75 aa).

Belongs to the eIF-1A family.

Functionally, seems to be required for maximal rate of protein biosynthesis. Enhances ribosome dissociation into subunits and stabilizes the binding of the initiator Met-tRNA(I) to 40 S ribosomal subunits. The sequence is that of Eukaryotic translation initiation factor 1A from Onobrychis viciifolia (Common sainfoin).